A 278-amino-acid polypeptide reads, in one-letter code: Large ribosomal subunit protein uL2 (278 aa).

Disordered regions lie at residues 1-59 (MAIR…GGHK) and 222-278 (RGAA…NKKR). The span at 16–27 (SSVSEFSEITRS) shows a compositional bias: polar residues. 2 stretches are compositionally biased toward basic residues: residues 45 to 59 (VHGH…GGHK) and 269 to 278 (VRRRRPNKKR).

Belongs to the universal ribosomal protein uL2 family. As to quaternary structure, part of the 50S ribosomal subunit. Forms a bridge to the 30S subunit in the 70S ribosome.

One of the primary rRNA binding proteins. Required for association of the 30S and 50S subunits to form the 70S ribosome, for tRNA binding and peptide bond formation. It has been suggested to have peptidyltransferase activity; this is somewhat controversial. Makes several contacts with the 16S rRNA in the 70S ribosome. The polypeptide is Large ribosomal subunit protein uL2 (Corynebacterium urealyticum (strain ATCC 43042 / DSM 7109)).